Consider the following 209-residue polypeptide: B3 domain-containing protein At2g31420 (209 aa).

Residues leucine 101–threonine 198 constitute a DNA-binding region (TF-B3).

It is found in the nucleus. The polypeptide is B3 domain-containing protein At2g31420 (Arabidopsis thaliana (Mouse-ear cress)).